The chain runs to 98 residues: Feather keratin 1 (98 aa).

Belongs to the avian keratin family. In terms of assembly, the avian keratins (F-ker, S-ker, C-ker and B-ker) are a complex mixture of very similar polypeptides.

This is Feather keratin 1 from Gallus gallus (Chicken).